We begin with the raw amino-acid sequence, 313 residues long: Myeloma-overexpressed gene protein (313 aa).

The tract at residues Glu107–Asp129 is disordered.

The polypeptide is Myeloma-overexpressed gene protein (MYEOV) (Homo sapiens (Human)).